Reading from the N-terminus, the 356-residue chain is Ferrochelatase (356 aa).

H214 and E295 together coordinate Fe cation.

Belongs to the ferrochelatase family.

Its subcellular location is the cytoplasm. The catalysed reaction is heme b + 2 H(+) = protoporphyrin IX + Fe(2+). It functions in the pathway porphyrin-containing compound metabolism; protoheme biosynthesis; protoheme from protoporphyrin-IX: step 1/1. Its function is as follows. Catalyzes the ferrous insertion into protoporphyrin IX. This chain is Ferrochelatase, found in Paraburkholderia phymatum (strain DSM 17167 / CIP 108236 / LMG 21445 / STM815) (Burkholderia phymatum).